Consider the following 468-residue polypeptide: uncharacterized protein (468 aa).

Positions 3-61 (TFANGMTLDVTVDALAPGGKAVCRHEGRVIFVDRGLPGQQLHVRLTTVRKRFAEAECLA) constitute a TRAM domain. 4 residues coordinate [4Fe-4S] cluster: C74, C80, C83, and C162. S-adenosyl-L-methionine contacts are provided by Q288, Y317, E338, and D389. The active-site Nucleophile is C416.

Belongs to the class I-like SAM-binding methyltransferase superfamily. RNA M5U methyltransferase family.

This is an uncharacterized protein from Nitratidesulfovibrio vulgaris (strain ATCC 29579 / DSM 644 / CCUG 34227 / NCIMB 8303 / VKM B-1760 / Hildenborough) (Desulfovibrio vulgaris).